A 317-amino-acid chain; its full sequence is mRNA 3'-end-processing protein yth-1 (317 aa).

The disordered stretch occupies residues 1-20 (MATTTQTTTNSLPSGAGGPQ). 5 C3H1-type zinc fingers span residues 51 to 78 (PADRPICKAYASGNCPLKSHCPERHVTA), 93 to 120 (GFGSLVCKHWLRGLCKKGESCEFLHEYN), 121 to 149 (LRKMPECNFFVRNGYCSNGDECLYLHIDP), 150 to 177 (LSRLPPCPHYERGFCPLGPRCDKKHFRR), and 179 to 202 (LCLYYLAGFCPDGKGCKEGAHPRW). Residues 202-217 (WTADKDMEKPRAKGEG) show a composition bias toward basic and acidic residues. A disordered region spans residues 202 to 317 (WTADKDMEKP…GRGGFRGKGH (116 aa)). The segment covering 223–237 (QQQQQQQQQQHMGDA) has biased composition (low complexity). The span at 253–288 (YMDRERERDRDNREREMMMQGRDRDGGGHDRHKDRF) shows a compositional bias: basic and acidic residues. Positions 289 to 301 (GGGGGGGGGGRGR) are enriched in gly residues. Residues 302–317 (GGWRGRGRGGFRGKGH) are compositionally biased toward basic residues.

This sequence belongs to the CPSF4/YTH1 family.

The protein resides in the nucleus. Its function is as follows. Component of the cleavage factor I (CF I) involved in pre-mRNA 3'-end processing. This chain is mRNA 3'-end-processing protein yth-1 (yth-1), found in Neurospora crassa (strain ATCC 24698 / 74-OR23-1A / CBS 708.71 / DSM 1257 / FGSC 987).